Reading from the N-terminus, the 129-residue chain is Small ribosomal subunit protein uS11 (129 aa).

It belongs to the universal ribosomal protein uS11 family. In terms of assembly, part of the 30S ribosomal subunit. Interacts with proteins S7 and S18. Binds to IF-3.

Its function is as follows. Located on the platform of the 30S subunit, it bridges several disparate RNA helices of the 16S rRNA. Forms part of the Shine-Dalgarno cleft in the 70S ribosome. This Serratia proteamaculans (strain 568) protein is Small ribosomal subunit protein uS11.